We begin with the raw amino-acid sequence, 91 residues long: Cell division topological specificity factor (91 aa).

It belongs to the MinE family.

Prevents the cell division inhibition by proteins MinC and MinD at internal division sites while permitting inhibition at polar sites. This ensures cell division at the proper site by restricting the formation of a division septum at the midpoint of the long axis of the cell. The sequence is that of Cell division topological specificity factor from Lachnospira eligens (strain ATCC 27750 / DSM 3376 / VPI C15-48 / C15-B4) (Eubacterium eligens).